An 847-amino-acid chain; its full sequence is Beta-hexosaminidase (847 aa).

3 cysteine pairs are disulfide-bonded: Cys31–Cys40, Cys377–Cys385, and Cys484–Cys530. The Proton donor role is filled by Glu519.

It belongs to the glycosyl hydrolase 20 family.

It carries out the reaction Hydrolysis of terminal non-reducing N-acetyl-D-hexosamine residues in N-acetyl-beta-D-hexosaminides.. The protein operates within glycan degradation; chitin degradation. In terms of biological role, hydrolysis of terminal, non-reducing N-acetyl-beta-D-glucosamine residues in chitobiose and higher analogs, and in glycoproteins. This Vibrio vulnificus protein is Beta-hexosaminidase (hex).